Here is a 289-residue protein sequence, read N- to C-terminus: Pantothenate synthetase (289 aa).

ATP is bound at residue Met30–His37. His37 acts as the Proton donor in catalysis. Gln61 provides a ligand contact to (R)-pantoate. Residue Gln61 participates in beta-alanine binding. An ATP-binding site is contributed by Gly147–Asp150. Gln153 is a (R)-pantoate binding site. ATP is bound by residues Val176 and Cys184 to Arg187.

Belongs to the pantothenate synthetase family. In terms of assembly, homodimer.

It localises to the cytoplasm. The enzyme catalyses (R)-pantoate + beta-alanine + ATP = (R)-pantothenate + AMP + diphosphate + H(+). The protein operates within cofactor biosynthesis; (R)-pantothenate biosynthesis; (R)-pantothenate from (R)-pantoate and beta-alanine: step 1/1. Functionally, catalyzes the condensation of pantoate with beta-alanine in an ATP-dependent reaction via a pantoyl-adenylate intermediate. The protein is Pantothenate synthetase of Allorhizobium ampelinum (strain ATCC BAA-846 / DSM 112012 / S4) (Agrobacterium vitis (strain S4)).